Reading from the N-terminus, the 24-residue chain is Lantibiotic 107891 (24 aa).

Position 2 is a (E)-2,3-didehydrobutyrine (threonine 2). Residues 3 to 7 (SWSLC) constitute a cross-link (lanthionine (Ser-Cys)). 6'-chlorotryptophan is present on tryptophan 4. Serine 5 is subject to 2,3-didehydroalanine (Ser). Residues 8-11 (TPGC) constitute a cross-link (beta-methyllanthionine (Thr-Cys)). 2 cross-links (lanthionine (Ser-Cys)) span residues 13 to 20 (SPGGGSNC) and 18 to 23 (SNCSFC). At proline 14 the chain carries 3,4-dihydroxyproline; in form A1. The residue at position 14 (proline 14) is a 4-hydroxyproline; in form A2. The segment at residues 21-24 (SFCC) is a cross-link (S-(2-aminovinyl)-D-cysteine (Ser-Cys)).

It belongs to the type A lantibiotic family. Maturation of lantibiotics involves the enzymatic conversion of Thr, and Ser into dehydrated AA and the formation of thioether bonds with cysteine. The C-terminal lanthionine undergoes decarboxylation. This is followed by membrane translocation and cleavage of the modified precursor. In terms of processing, occurs in 2 forms, A1 contains 3,4-dihydroxyproline at Pro-14, A2 contains 4-hydroxyproline at Pro-14. The patent report does not provide the stereochemistry of the modified prolines. Post-translationally, the patent report does not describe whether the 2,3-didehydrobutyrine is the E- or Z-isomer. In several diagrams it is shown as the E-isomer.

Functionally, lanthionine-containing peptide antibiotic (lantibiotic) active on Gram-positive bacteria. The bactericidal activity of lantibiotics is based on depolarization of energized bacterial cytoplasmic membranes, initiated by the formation of aqueous transmembrane pores. The sequence is that of Lantibiotic 107891 from Microbispora sp. (strain 107891).